A 387-amino-acid polypeptide reads, in one-letter code: V-set and immunoglobulin domain-containing protein 1 (387 aa).

An N-terminal signal peptide occupies residues 1-21 (MVFAFWKVFLILSCLAGQVSV). Positions 22–132 (VQVTIPDGFV…DFLGQNQGIL (111 aa)) constitute an Ig-like V-type domain. The Extracellular segment spans residues 22–232 (VQVTIPDGFV…EIDLTSSHPE (211 aa)). Residues N32 and N38 are each glycosylated (N-linked (GlcNAc...) asparagine). Cysteines 43 and 116 form a disulfide. N133, N200, and N219 each carry an N-linked (GlcNAc...) asparagine glycan. Residues 140 to 227 (PSKPLCSVQG…GNSSCEIDLT (88 aa)) form the Ig-like C2-type domain. C161 and C211 are disulfide-bonded. Residues 233-253 (VGIIVGALIGSLVGAAIIISV) form a helical membrane-spanning segment. Topologically, residues 254–387 (VCFARNKAKA…SEDEKGVVKA (134 aa)) are cytoplasmic. The interval 266-387 (KERNSKTIAE…SEDEKGVVKA (122 aa)) is disordered. A compositionally biased stretch (basic and acidic residues) spans 284 to 296 (PRGESEAMPREDA). Residues 299 to 308 (LEVTLPSSIH) are compositionally biased toward polar residues. Over residues 325–335 (TQEPAPEPAPG) the composition is skewed to pro residues. Residues 344–368 (LDIELELEPETQSELEPEPEPEPES) show a composition bias toward acidic residues.

In terms of processing, highly N-glycosylated. Appears not to contain significant amounts of O-linked carbohydrates or sialic acid in its sugar moieties. In terms of tissue distribution, detected only in stomach mucosa and testis, and to a much lesser level in pancreas (at protein level). Detected in gastric cancers (31%), esophageal carcinomas (50%) and ovarian cancers (23%).

Its subcellular location is the membrane. The sequence is that of V-set and immunoglobulin domain-containing protein 1 (VSIG1) from Homo sapiens (Human).